Reading from the N-terminus, the 334-residue chain is Holliday junction branch migration complex subunit RuvB (334 aa).

The segment at Ala-4–Tyr-184 is large ATPase domain (RuvB-L). ATP is bound by residues Arg-24, Gly-65, Lys-68, Thr-69, Thr-70, Glu-131–Tyr-133, Arg-174, Tyr-184, and Arg-221. Thr-69 lines the Mg(2+) pocket. Residues Asn-185–Asp-255 are small ATPAse domain (RuvB-S). The head domain (RuvB-H) stretch occupies residues Gly-258 to Glu-334. Residues Arg-294, Arg-313, and Arg-318 each coordinate DNA.

This sequence belongs to the RuvB family. Homohexamer. Forms an RuvA(8)-RuvB(12)-Holliday junction (HJ) complex. HJ DNA is sandwiched between 2 RuvA tetramers; dsDNA enters through RuvA and exits via RuvB. An RuvB hexamer assembles on each DNA strand where it exits the tetramer. Each RuvB hexamer is contacted by two RuvA subunits (via domain III) on 2 adjacent RuvB subunits; this complex drives branch migration. In the full resolvosome a probable DNA-RuvA(4)-RuvB(12)-RuvC(2) complex forms which resolves the HJ.

The protein resides in the cytoplasm. The enzyme catalyses ATP + H2O = ADP + phosphate + H(+). In terms of biological role, the RuvA-RuvB-RuvC complex processes Holliday junction (HJ) DNA during genetic recombination and DNA repair, while the RuvA-RuvB complex plays an important role in the rescue of blocked DNA replication forks via replication fork reversal (RFR). RuvA specifically binds to HJ cruciform DNA, conferring on it an open structure. The RuvB hexamer acts as an ATP-dependent pump, pulling dsDNA into and through the RuvAB complex. RuvB forms 2 homohexamers on either side of HJ DNA bound by 1 or 2 RuvA tetramers; 4 subunits per hexamer contact DNA at a time. Coordinated motions by a converter formed by DNA-disengaged RuvB subunits stimulates ATP hydrolysis and nucleotide exchange. Immobilization of the converter enables RuvB to convert the ATP-contained energy into a lever motion, pulling 2 nucleotides of DNA out of the RuvA tetramer per ATP hydrolyzed, thus driving DNA branch migration. The RuvB motors rotate together with the DNA substrate, which together with the progressing nucleotide cycle form the mechanistic basis for DNA recombination by continuous HJ branch migration. Branch migration allows RuvC to scan DNA until it finds its consensus sequence, where it cleaves and resolves cruciform DNA. The chain is Holliday junction branch migration complex subunit RuvB from Shewanella sp. (strain MR-7).